Here is a 93-residue protein sequence, read N- to C-terminus: Small ribosomal subunit protein uS19 (93 aa).

The protein belongs to the universal ribosomal protein uS19 family.

Its function is as follows. Protein S19 forms a complex with S13 that binds strongly to the 16S ribosomal RNA. The protein is Small ribosomal subunit protein uS19 of Clostridioides difficile (strain 630) (Peptoclostridium difficile).